The primary structure comprises 470 residues: Nucleoporin NUP49 (470 aa).

Polar residues predominate over residues 1–13; sequence MSLFGTNTTSQTP. Residues 1 to 92 form a disordered region; sequence MSLFGTNTTS…STTTTTSQPQ (92 aa). 12 GLFG repeats span residues 17-20, 45-48, 63-66, 79-82, 96-99, 111-114, 127-130, 142-145, 156-159, 168-171, 181-184, and 193-197; these read GLFG and GLFGQ. A compositionally biased stretch (low complexity) spans 20-31; sequence GTTTSQSAQTGS. Over residues 32 to 74 the composition is skewed to polar residues; sequence LFGTATSQPQQTGGLFGSTATQTPSSQLQSTGLFGSTTATSQP. Residues 75–92 show a composition bias toward low complexity; that stretch reads QQTGGLFGSTTTTTSQPQ. Residues 196 to 221 form a disordered region; it reads GQSTTQPQQQQNATPGLTMGQSTNTQ. Residues 197-206 are compositionally biased toward low complexity; that stretch reads QSTTQPQQQQ. Over residues 207–221 the composition is skewed to polar residues; the sequence is NATPGLTMGQSTNTQ. Coiled-coil stretches lie at residues 239–270 and 375–401; these read TRFN…EAVD and FSKT…AHLT.

It belongs to the nucleoporin GLFG family. In terms of assembly, component of the nuclear pore complex (NPC). NPC constitutes the exclusive means of nucleocytoplasmic transport. NPCs allow the passive diffusion of ions and small molecules and the active, nuclear transport receptor-mediated bidirectional transport of macromolecules such as proteins, RNAs, ribonucleoparticles (RNPs), and ribosomal subunits across the nuclear envelope. Due to its 8-fold rotational symmetry, all subunits are present with 8 copies or multiples thereof.

The protein localises to the nucleus. Its subcellular location is the nuclear pore complex. It is found in the nucleus membrane. Functionally, functions as a component of the nuclear pore complex (NPC). NPC components, collectively referred to as nucleoporins (NUPs), can play the role of both NPC structural components and of docking or interaction partners for transiently associated nuclear transport factors. Active directional transport is assured by both, a Phe-Gly (FG) repeat affinity gradient for these transport factors across the NPC and a transport cofactor concentration gradient across the nuclear envelope (GSP1 and GSP2 GTPases associated predominantly with GTP in the nucleus, with GDP in the cytoplasm). NUP49 plays an important role in several nuclear transport pathways including poly(A)+ RNA, tRNA, and pre-ribosome transport. The protein is Nucleoporin NUP49 (NUP49) of Chaetomium thermophilum (strain DSM 1495 / CBS 144.50 / IMI 039719) (Thermochaetoides thermophila).